The chain runs to 326 residues: Amino acid--[acyl-carrier-protein] ligase 1 (326 aa).

Cysteine 131 contacts Zn(2+). ATP is bound by residues arginine 159, glutamate 161, and 168-169 (RL). Glutamate 176 provides a ligand contact to Zn(2+). Residue glutamate 176 coordinates an L-alpha-amino acid. Residues lysine 235 and 250–253 (ACMS) each bind ATP. Zn(2+) is bound at residue cysteine 279. Arginine 286 contacts ATP.

Belongs to the class-II aminoacyl-tRNA synthetase family. Amino acid--[acyl-carrier-protein] ligase subfamily. Homodimer. Requires Zn(2+) as cofactor.

The enzyme catalyses an L-alpha-amino acid + holo-[ACP] + ATP = an L-alpha-aminoacyl-[ACP] + AMP + diphosphate. In terms of biological role, catalyzes the ATP-dependent activation of L-glycine and its transfer to the phosphopantetheine prosthetic group covalently attached to the vicinal carrier protein bsr0959 of yet unknown function. May participate in nonribosomal peptide synthesis or related processes. L-alanine is a poor substrate whereas L-serine or D-amino acids are not substrates for ATP-dependent activation. Does not display tRNA aminoacylation activity. This is Amino acid--[acyl-carrier-protein] ligase 1 from Bradyrhizobium diazoefficiens (strain JCM 10833 / BCRC 13528 / IAM 13628 / NBRC 14792 / USDA 110).